The following is a 67-amino-acid chain: Large ribosomal subunit protein bL35 (67 aa).

This sequence belongs to the bacterial ribosomal protein bL35 family.

This chain is Large ribosomal subunit protein bL35, found in Deinococcus geothermalis (strain DSM 11300 / CIP 105573 / AG-3a).